A 556-amino-acid polypeptide reads, in one-letter code: 2-isopropylmalate synthase (556 aa).

The Pyruvate carboxyltransferase domain occupies 33–307 (PIWCSSDLRD…NPGLDFSDID (275 aa)). Residues D42, H246, H248, and N282 each contribute to the Mg(2+) site. Residues 439–556 (ANVPYALISH…SLSQTQAKAA (118 aa)) are regulatory domain.

The protein belongs to the alpha-IPM synthase/homocitrate synthase family. LeuA type 2 subfamily. As to quaternary structure, homodimer. The cofactor is Mg(2+).

The protein resides in the cytoplasm. The enzyme catalyses 3-methyl-2-oxobutanoate + acetyl-CoA + H2O = (2S)-2-isopropylmalate + CoA + H(+). The protein operates within amino-acid biosynthesis; L-leucine biosynthesis; L-leucine from 3-methyl-2-oxobutanoate: step 1/4. Functionally, catalyzes the condensation of the acetyl group of acetyl-CoA with 3-methyl-2-oxobutanoate (2-ketoisovalerate) to form 3-carboxy-3-hydroxy-4-methylpentanoate (2-isopropylmalate). This Pseudomonas syringae pv. syringae (strain B728a) protein is 2-isopropylmalate synthase.